The sequence spans 87 residues: U3-theraphotoxin-Hhn1a 12 (87 aa).

The signal sequence occupies residues 1-24; that stretch reads MVNMKASMFLTFAGLVLLFVVCYA. The propeptide occupies 25-52; the sequence is SESEEKEFPKEMLSSIFAVDKDFKQEER. 3 disulfide bridges follow: Cys54–Cys67, Cys61–Cys72, and Cys66–Cys79.

This sequence belongs to the neurotoxin 10 (Hwtx-1) family. 51 (Hntx-8) subfamily. Hntx-8 sub-subfamily. Expressed by the venom gland.

Its subcellular location is the secreted. In terms of biological role, ion channel inhibitor. This chain is U3-theraphotoxin-Hhn1a 12, found in Cyriopagopus hainanus (Chinese bird spider).